We begin with the raw amino-acid sequence, 151 residues long: Neuroglobin (151 aa).

One can recognise a Globin domain in the interval 1–149; that stretch reads MERPESELIR…VVQAMSRGWD (149 aa). Heme b contacts are provided by His-64 and His-96.

It belongs to the globin family. As to quaternary structure, monomer. Homodimer and homotetramer; disulfide-linked. Mainly monomeric but also detected as part of homodimers and homotetramers. Interacts with 14-3-3 proteins; regulates the phosphorylation of NGB. Could interact (ferrous form) with G-alpha(i) proteins (GTP-bound form). In terms of processing, phosphorylated during hypoxia by ERK1/ERK2. Phosphorylation regulates the heme pocket hexacoordination preventing the association of His-64 with the heme metal center. Thereby, promotes the access of dioxygen and nitrite to the heme and stimulates the nitrite reductase activity. Phosphorylation during hypoxia is stabilized by 14-3-3 proteins. Widely distributed throughout the adult brain, including cerebral cortex, hippocampus, thalamus, hypothalamus, olfactory bulb, and cerebellum.

The protein resides in the cytoplasm. The protein localises to the cytosol. Its subcellular location is the mitochondrion matrix. It carries out the reaction Fe(III)-heme b-[protein] + nitric oxide + H2O = Fe(II)-heme b-[protein] + nitrite + 2 H(+). Functionally, monomeric globin with a bis-histidyl six-coordinate heme-iron atom through which it can bind dioxygen, carbon monoxide and nitric oxide. Could help transport oxygen and increase its availability to the metabolically active neuronal tissues, though its low quantity in tissues as well as its high affinity for dioxygen, which may limit its oxygen-releasing ability, argue against it. The ferrous/deoxygenated form exhibits a nitrite reductase activity and it could produce nitric oxide which in turn inhibits cellular respiration in response to hypoxia. In its ferrous/deoxygenated state, it may also exhibit GDI (Guanine nucleotide Dissociation Inhibitor) activity toward heterotrimeric G-alpha proteins, thereby regulating signal transduction to facilitate neuroprotective responses in the wake of hypoxia and associated oxidative stress. In Rattus norvegicus (Rat), this protein is Neuroglobin.